Reading from the N-terminus, the 670-residue chain is tRNA 5-methylaminomethyl-2-thiouridine biosynthesis bifunctional protein MnmC (670 aa).

Residues 1–242 form a tRNA (mnm(5)s(2)U34)-methyltransferase region; it reads MTFSVQHAEI…KRECLSGLKI (242 aa). The FAD-dependent cmnm(5)s(2)U34 oxidoreductase stretch occupies residues 269–670; the sequence is IGGGIASLCA…KKWLKGSKVE (402 aa).

The protein in the N-terminal section; belongs to the methyltransferase superfamily. tRNA (mnm(5)s(2)U34)-methyltransferase family. In the C-terminal section; belongs to the DAO family. FAD is required as a cofactor.

It is found in the cytoplasm. The catalysed reaction is 5-aminomethyl-2-thiouridine(34) in tRNA + S-adenosyl-L-methionine = 5-methylaminomethyl-2-thiouridine(34) in tRNA + S-adenosyl-L-homocysteine + H(+). Its function is as follows. Catalyzes the last two steps in the biosynthesis of 5-methylaminomethyl-2-thiouridine (mnm(5)s(2)U) at the wobble position (U34) in tRNA. Catalyzes the FAD-dependent demodification of cmnm(5)s(2)U34 to nm(5)s(2)U34, followed by the transfer of a methyl group from S-adenosyl-L-methionine to nm(5)s(2)U34, to form mnm(5)s(2)U34. This Haemophilus influenzae (strain PittGG) protein is tRNA 5-methylaminomethyl-2-thiouridine biosynthesis bifunctional protein MnmC.